The chain runs to 109 residues: Co-chaperonin GroES (109 aa).

It belongs to the GroES chaperonin family. In terms of assembly, heptamer of 7 subunits arranged in a ring. Interacts with the chaperonin GroEL.

The protein resides in the cytoplasm. Functionally, together with the chaperonin GroEL, plays an essential role in assisting protein folding. The GroEL-GroES system forms a nano-cage that allows encapsulation of the non-native substrate proteins and provides a physical environment optimized to promote and accelerate protein folding. GroES binds to the apical surface of the GroEL ring, thereby capping the opening of the GroEL channel. This is Co-chaperonin GroES from Methanosarcina acetivorans (strain ATCC 35395 / DSM 2834 / JCM 12185 / C2A).